The following is a 208-amino-acid chain: Uracil phosphoribosyltransferase (208 aa).

5-phospho-alpha-D-ribose 1-diphosphate-binding positions include arginine 78, arginine 103, and 130-138 (DPMLATGGS). Residues isoleucine 193 and 198 to 200 (GDA) contribute to the uracil site. Aspartate 199 serves as a coordination point for 5-phospho-alpha-D-ribose 1-diphosphate.

This sequence belongs to the UPRTase family. Requires Mg(2+) as cofactor.

The enzyme catalyses UMP + diphosphate = 5-phospho-alpha-D-ribose 1-diphosphate + uracil. The protein operates within pyrimidine metabolism; UMP biosynthesis via salvage pathway; UMP from uracil: step 1/1. Allosterically activated by GTP. In terms of biological role, catalyzes the conversion of uracil and 5-phospho-alpha-D-ribose 1-diphosphate (PRPP) to UMP and diphosphate. This chain is Uracil phosphoribosyltransferase, found in Psychromonas ingrahamii (strain DSM 17664 / CCUG 51855 / 37).